The chain runs to 266 residues: Luciferase (266 aa).

The helical transmembrane segment at 22–41 (GLAVTCCAVAVASIIAFPYI) threads the bilayer.

The protein belongs to the fungal luciferase family.

It is found in the membrane. It catalyses the reaction 3-hydroxyhispidin + O2 = (E)-caffeoylpyruvate + hnu + CO2. The catalysed reaction is 3-hydroxyhispidin + O2 = 4-[(E)-2-(3,4-dihydroxyphenyl)ethenyl]-1,7-dihydroxy-2,3,5-trioxabicyclo[2.2.2]oct-7-en-6-one. Luciferase; part of the gene cluster that mediates the fungal bioluminescence cycle. Uses the fungal luciferin 3-hydroxyhispidin as a substrate to produce an endoperoxide as a high-energy intermediate with decomposition that yields oxyluciferin (also known as caffeoylpyruvate) and light emission. The fungal bioluminescence cycle begins with the hispidin synthetase that catalyzes the formation of hispidin which is further hydroxylated by the hispidin-3-hydroxylase, yielding the fungal luciferin 3-hydroxyhispidin. The luciferase then produces an endoperoxide as a high-energy intermediate with decomposition that yields oxyluciferin and light emission. Oxyluciferin can be recycled to caffeic acid by caffeoylpyruvate hydrolase. The sequence is that of Luciferase from Armillaria mellea (Honey mushroom).